A 281-amino-acid chain; its full sequence is Cytochrome bc1 complex cytochrome c subunit (281 aa).

The helical transmembrane segment at 17-37 threads the bilayer; the sequence is AAGAMALAVGLTGAGILVNAV. 2 consecutive Cytochrome c domains span residues 52–132 and 162–240; these read ALIQ…EANG and ADVA…KSAK. The heme c site is built by Cys-65, Cys-68, His-69, Cys-175, Cys-178, and His-179. A helical membrane pass occupies residues 259–279; sequence GMMMWLVGIVVLVAAAMWIGS.

As to quaternary structure, the cytochrome bc1 complex is composed of a cytochrome b (QcrB), the Rieske iron-sulfur protein (QcrA) and a diheme cytochrome c (QcrC) subunit. The bc1 complex forms a supercomplex with cytochrome c oxidase (cytochrome aa3). In terms of processing, binds 2 heme c groups covalently per subunit.

It is found in the cell membrane. The catalysed reaction is a quinol + 2 Fe(III)-[cytochrome c](out) = a quinone + 2 Fe(II)-[cytochrome c](out) + 2 H(+)(out). Cytochrome c1 subunit of the cytochrome bc1 complex, an essential component of the respiratory electron transport chain required for ATP synthesis. The bc1 complex catalyzes the oxidation of menaquinol and the reduction of cytochrome c in the respiratory chain. The bc1 complex operates through a Q-cycle mechanism that couples electron transfer to generation of the proton gradient that drives ATP synthesis. The chain is Cytochrome bc1 complex cytochrome c subunit (qcrC) from Corynebacterium diphtheriae (strain ATCC 700971 / NCTC 13129 / Biotype gravis).